The chain runs to 378 residues: Small ribosomal subunit protein bS1 (378 aa).

S1 motif domains lie at glutamate 1–arginine 66, glycine 87–lysine 155, glycine 172–lysine 242, glycine 259–lysine 329, and glycine 346–alanine 378.

The protein belongs to the bacterial ribosomal protein bS1 family.

Its function is as follows. Binds mRNA; thus facilitating recognition of the initiation point. It is needed to translate mRNA with a short Shine-Dalgarno (SD) purine-rich sequence. This chain is Small ribosomal subunit protein bS1 (rpsA), found in Providencia sp.